A 349-amino-acid chain; its full sequence is Probable ethanolamine kinase (349 aa).

This sequence belongs to the choline/ethanolamine kinase family.

The protein localises to the cytoplasm. The enzyme catalyses ethanolamine + ATP = phosphoethanolamine + ADP + H(+). The protein operates within phospholipid metabolism; phosphatidylethanolamine biosynthesis; phosphatidylethanolamine from ethanolamine: step 1/3. In terms of biological role, highly specific for ethanolamine phosphorylation. May be a rate-controlling step in phosphatidylethanolamine biosynthesis. The protein is Probable ethanolamine kinase (etnk) of Nematostella vectensis (Starlet sea anemone).